The chain runs to 233 residues: 2,3,4,5-tetrahydropyridine-2,6-dicarboxylate N-acetyltransferase (233 aa).

This sequence belongs to the transferase hexapeptide repeat family. DapH subfamily.

The catalysed reaction is (S)-2,3,4,5-tetrahydrodipicolinate + acetyl-CoA + H2O = L-2-acetamido-6-oxoheptanedioate + CoA. The protein operates within amino-acid biosynthesis; L-lysine biosynthesis via DAP pathway; LL-2,6-diaminopimelate from (S)-tetrahydrodipicolinate (acetylase route): step 1/3. Its function is as follows. Catalyzes the transfer of an acetyl group from acetyl-CoA to tetrahydrodipicolinate. The chain is 2,3,4,5-tetrahydropyridine-2,6-dicarboxylate N-acetyltransferase from Enterococcus faecalis (strain ATCC 700802 / V583).